The sequence spans 86 residues: MANIKSAKKRAVQSEKRRKHNASGRSMMRTYIKKVEAAIATGDKEAAQAAYAVMKPIVDRKAAKGLIHKNKAARHKSNLSARINAL.

Basic residues predominate over residues 1–22; it reads MANIKSAKKRAVQSEKRRKHNA. The tract at residues 1–28 is disordered; it reads MANIKSAKKRAVQSEKRRKHNASGRSMM.

Belongs to the bacterial ribosomal protein bS20 family.

In terms of biological role, binds directly to 16S ribosomal RNA. The sequence is that of Small ribosomal subunit protein bS20 from Serratia proteamaculans (strain 568).